The primary structure comprises 513 residues: uncharacterized protein (513 aa).

Over residues 1–16 the composition is skewed to basic and acidic residues; sequence MPREHDSKYHRERDMR. The segment at 1-21 is disordered; the sequence is MPREHDSKYHRERDMRSGLQE.

This is an uncharacterized protein from Sinorhizobium fredii (strain NBRC 101917 / NGR234).